A 136-amino-acid polypeptide reads, in one-letter code: Holo-[acyl-carrier-protein] synthase (136 aa).

2 residues coordinate Mg(2+): D8 and E62.

Belongs to the P-Pant transferase superfamily. AcpS family. Requires Mg(2+) as cofactor.

The protein localises to the cytoplasm. The enzyme catalyses apo-[ACP] + CoA = holo-[ACP] + adenosine 3',5'-bisphosphate + H(+). In terms of biological role, transfers the 4'-phosphopantetheine moiety from coenzyme A to a Ser of acyl-carrier-protein. The sequence is that of Holo-[acyl-carrier-protein] synthase from Polynucleobacter necessarius subsp. necessarius (strain STIR1).